Reading from the N-terminus, the 179-residue chain is uncharacterized protein (179 aa).

This sequence belongs to the CAPAB/TerDEXZ family.

This is an uncharacterized protein from Synechocystis sp. (strain ATCC 27184 / PCC 6803 / Kazusa).